Reading from the N-terminus, the 332-residue chain is Ketol-acid reductoisomerase (NAD(+)) (332 aa).

A KARI N-terminal Rossmann domain is found at 1-181 (MKIYYDQDAD…GATRAGVIQT (181 aa)). NAD(+) contacts are provided by residues 24–27 (YGSQ), S50, and 82–85 (DEKQ). H107 is a catalytic residue. G133 provides a ligand contact to NAD(+). A KARI C-terminal knotted domain is found at 182–327 (TFKEETETDL…ARLRGMMPWL (146 aa)). D190, E194, E226, and E230 together coordinate Mg(2+). S251 contacts substrate.

The protein belongs to the ketol-acid reductoisomerase family. Mg(2+) is required as a cofactor.

The catalysed reaction is (2R)-2,3-dihydroxy-3-methylbutanoate + NAD(+) = (2S)-2-acetolactate + NADH + H(+). It functions in the pathway amino-acid biosynthesis; L-isoleucine biosynthesis; L-isoleucine from 2-oxobutanoate: step 2/4. The protein operates within amino-acid biosynthesis; L-valine biosynthesis; L-valine from pyruvate: step 2/4. Functionally, involved in the biosynthesis of branched-chain amino acids (BCAA). Catalyzes an alkyl-migration followed by a ketol-acid reduction of (S)-2-acetolactate (S2AL) to yield (R)-2,3-dihydroxy-isovalerate. In the isomerase reaction, S2AL is rearranged via a Mg-dependent methyl migration to produce 3-hydroxy-3-methyl-2-ketobutyrate (HMKB). In the reductase reaction, this 2-ketoacid undergoes a metal-dependent reduction by NADH to yield (R)-2,3-dihydroxy-isovalerate. The protein is Ketol-acid reductoisomerase (NAD(+)) of Thermacetogenium phaeum (strain ATCC BAA-254 / DSM 26808 / PB).